The sequence spans 321 residues: L-carnitine dehydrogenase (321 aa).

Residue 14-19 (GSGVIG) coordinates NAD(+).

Belongs to the 3-hydroxyacyl-CoA dehydrogenase family. L-carnitine dehydrogenase subfamily. As to quaternary structure, homodimer.

Its subcellular location is the cytoplasm. The catalysed reaction is carnitine + NAD(+) = 3-dehydrocarnitine + NADH + H(+). It participates in amine and polyamine metabolism; carnitine metabolism. Its activity is regulated as follows. Analogs of L-carnitine such as D-carnitine, glycine betaine and choline, are competitive inhibitors of L-carnitine oxidation. Catalyzes the NAD(+)-dependent oxidation of L-carnitine to 3-dehydrocarnitine. Is specific for L-carnitine and NAD(+) as substrates. D,L-3-hydroxybutyrate, L-lactate, ethanol, L-malate and D,L-isocitrate are not substrates. Is involved in a L-carnitine degradation pathway that allows P.aeruginosa to grow on L-carnitine as the sole source of carbon and nitrogen. This chain is L-carnitine dehydrogenase, found in Pseudomonas aeruginosa (strain ATCC 15692 / DSM 22644 / CIP 104116 / JCM 14847 / LMG 12228 / 1C / PRS 101 / PAO1).